The primary structure comprises 313 residues: NAD-capped RNA hydrolase NudC (313 aa).

R111 contacts substrate. Residues 168-293 (PRIDPAVICL…DWSSASESKL (126 aa)) form the Nudix hydrolase domain. Residues A202, E218, and E222 each contribute to the a divalent metal cation site. A Nudix box motif is present at residues 203 to 224 (GFVEAGESFEVCVAREIREEIG). 236 to 243 (QPWPFPRS) serves as a coordination point for substrate. An a divalent metal cation-binding site is contributed by E264.

It belongs to the Nudix hydrolase family. NudC subfamily. As to quaternary structure, homodimer. Mg(2+) is required as a cofactor. It depends on Mn(2+) as a cofactor.

It carries out the reaction a 5'-end NAD(+)-phospho-ribonucleoside in mRNA + H2O = a 5'-end phospho-adenosine-phospho-ribonucleoside in mRNA + beta-nicotinamide D-ribonucleotide + 2 H(+). The enzyme catalyses NAD(+) + H2O = beta-nicotinamide D-ribonucleotide + AMP + 2 H(+). The catalysed reaction is NADH + H2O = reduced beta-nicotinamide D-ribonucleotide + AMP + 2 H(+). In terms of biological role, mRNA decapping enzyme that specifically removes the nicotinamide adenine dinucleotide (NAD) cap from a subset of mRNAs by hydrolyzing the diphosphate linkage to produce nicotinamide mononucleotide (NMN) and 5' monophosphate mRNA. The NAD-cap is present at the 5'-end of some mRNAs and stabilizes RNA against 5'-processing. Has preference for mRNAs with a 5'-end purine. Catalyzes the hydrolysis of a broad range of dinucleotide pyrophosphates. The chain is NAD-capped RNA hydrolase NudC from Mycobacterium bovis (strain ATCC BAA-935 / AF2122/97).